The sequence spans 88 residues: Small ribosomal subunit protein uS15 (88 aa).

The protein belongs to the universal ribosomal protein uS15 family. In terms of assembly, part of the 30S ribosomal subunit. Forms a bridge to the 50S subunit in the 70S ribosome, contacting the 23S rRNA.

Functionally, one of the primary rRNA binding proteins, it binds directly to 16S rRNA where it helps nucleate assembly of the platform of the 30S subunit by binding and bridging several RNA helices of the 16S rRNA. Forms an intersubunit bridge (bridge B4) with the 23S rRNA of the 50S subunit in the ribosome. The chain is Small ribosomal subunit protein uS15 from Francisella tularensis subsp. novicida (strain U112).